The chain runs to 620 residues: Tyrosine-protein kinase ITK/TSK (620 aa).

The region spanning 4 to 111 is the PH domain; it reads FILLEEQLIK…WVLALKEETR (108 aa). The segment at 113–149 adopts a Btk-type zinc-finger fold; the sequence is NNSLVPKYHPNFWMDGKWRCCSQLEKLATGCAQYDPT. Histidine 121, cysteine 132, cysteine 133, and cysteine 143 together coordinate Zn(2+). An SH3 domain is found at 171-231; sequence PEETVVIALY…PSSYLVEKSP (61 aa). The residue at position 180 (tyrosine 180) is a Phosphotyrosine; by autocatalysis. An SH2 domain is found at 239–338; that stretch reads WYNKSISRDK…GLVTRLRYPV (100 aa). The Protein kinase domain maps to 363 to 615; sequence LTFVQEIGSG…SRLLRQLAEI (253 aa). Residues 369-377 and lysine 391 each bind ATP; that span reads IGSGQFGLV. Aspartate 482 functions as the Proton acceptor in the catalytic mechanism. Phosphotyrosine; by LCK is present on tyrosine 512. Phosphoserine is present on serine 565.

The protein belongs to the protein kinase superfamily. Tyr protein kinase family. TEC subfamily. As to quaternary structure, homooligomerizes; this association negatively regulates kinase activity. Interacts with PPIA/CYPA; this interaction regulates TCR signal strength via a proline-directed conformational switch in ITK. Interacts with THEMIS. Interacts with FASLG. Interacts with VAV1; this interaction is important for VAV1 localization and TCR-induced actin polarization. Interacts with TBX21. Zn(2+) is required as a cofactor. Post-translationally, phosphorylated at Tyr-512 in the activation loop of the kinase domain by LCK. Subsequent autophosphorylation at Tyr-180 leads to the kinase activation. The autophosphorylated Tyr-180 lies within the substrate binding sequence of the SH3 domain. Ubiquitinated. T-cell lines and natural killer cell lines.

The protein localises to the cytoplasm. Its subcellular location is the nucleus. It catalyses the reaction L-tyrosyl-[protein] + ATP = O-phospho-L-tyrosyl-[protein] + ADP + H(+). Tyrosine kinase that plays an essential role in regulation of the adaptive immune response. Regulates the development, function and differentiation of conventional T-cells and nonconventional NKT-cells. When antigen presenting cells (APC) activate T-cell receptor (TCR), a series of phosphorylation lead to the recruitment of ITK to the cell membrane, in the vicinity of the stimulated TCR receptor, where it is phosphorylated by LCK. Phosphorylation leads to ITK autophosphorylation and full activation. Once activated, phosphorylates PLCG1, leading to the activation of this lipase and subsequent cleavage of its substrates. In turn, the endoplasmic reticulum releases calcium in the cytoplasm and the nuclear activator of activated T-cells (NFAT) translocates into the nucleus to perform its transcriptional duty. Phosphorylates 2 essential adapter proteins: the linker for activation of T-cells/LAT protein and LCP2. Then, a large number of signaling molecules such as VAV1 are recruited and ultimately lead to lymphokine production, T-cell proliferation and differentiation. Required for TCR-mediated calcium response in gamma-delta T-cells, may also be involved in the modulation of the transcriptomic signature in the Vgamma2-positive subset of immature gamma-delta T-cells. Phosphorylates TBX21 at 'Tyr-530' and mediates its interaction with GATA3. The chain is Tyrosine-protein kinase ITK/TSK (ITK) from Homo sapiens (Human).